We begin with the raw amino-acid sequence, 396 residues long: Acetylornithine aminotransferase 2 (396 aa).

Pyridoxal 5'-phosphate is bound by residues 102 to 103 (GA) and F134. R137 provides a ligand contact to N(2)-acetyl-L-ornithine. Residue 219 to 222 (DEVQ) participates in pyridoxal 5'-phosphate binding. K248 is subject to N6-(pyridoxal phosphate)lysine. Position 276 (T276) interacts with pyridoxal 5'-phosphate.

It belongs to the class-III pyridoxal-phosphate-dependent aminotransferase family. ArgD subfamily. Homodimer. Requires pyridoxal 5'-phosphate as cofactor.

Its subcellular location is the cytoplasm. The catalysed reaction is N(2)-acetyl-L-ornithine + 2-oxoglutarate = N-acetyl-L-glutamate 5-semialdehyde + L-glutamate. It functions in the pathway amino-acid biosynthesis; L-arginine biosynthesis; N(2)-acetyl-L-ornithine from L-glutamate: step 4/4. The chain is Acetylornithine aminotransferase 2 from Bordetella bronchiseptica (strain ATCC BAA-588 / NCTC 13252 / RB50) (Alcaligenes bronchisepticus).